Here is a 779-residue protein sequence, read N- to C-terminus: Phosphoribosylformylglycinamidine synthase subunit PurL (779 aa).

His52 is an active-site residue. ATP contacts are provided by Tyr55 and Lys94. Glu96 lines the Mg(2+) pocket. Residues 97–100 (SHNH) and Arg119 each bind substrate. His98 serves as the catalytic Proton acceptor. A Mg(2+)-binding site is contributed by Asp120. Gln243 is a binding site for substrate. Asp271 lines the Mg(2+) pocket. 315-317 (ESQ) is a binding site for substrate. ATP-binding residues include Asn523 and Gly560. Residue Asn561 coordinates Mg(2+). Substrate is bound at residue Ser563.

The protein belongs to the FGAMS family. Monomer. Part of the FGAM synthase complex composed of 1 PurL, 1 PurQ and 2 PurS subunits.

Its subcellular location is the cytoplasm. The catalysed reaction is N(2)-formyl-N(1)-(5-phospho-beta-D-ribosyl)glycinamide + L-glutamine + ATP + H2O = 2-formamido-N(1)-(5-O-phospho-beta-D-ribosyl)acetamidine + L-glutamate + ADP + phosphate + H(+). It participates in purine metabolism; IMP biosynthesis via de novo pathway; 5-amino-1-(5-phospho-D-ribosyl)imidazole from N(2)-formyl-N(1)-(5-phospho-D-ribosyl)glycinamide: step 1/2. Functionally, part of the phosphoribosylformylglycinamidine synthase complex involved in the purines biosynthetic pathway. Catalyzes the ATP-dependent conversion of formylglycinamide ribonucleotide (FGAR) and glutamine to yield formylglycinamidine ribonucleotide (FGAM) and glutamate. The FGAM synthase complex is composed of three subunits. PurQ produces an ammonia molecule by converting glutamine to glutamate. PurL transfers the ammonia molecule to FGAR to form FGAM in an ATP-dependent manner. PurS interacts with PurQ and PurL and is thought to assist in the transfer of the ammonia molecule from PurQ to PurL. The polypeptide is Phosphoribosylformylglycinamidine synthase subunit PurL (Prochlorococcus marinus (strain MIT 9215)).